Here is a 373-residue protein sequence, read N- to C-terminus: Meiosis-specific kinetochore protein (373 aa).

Disordered regions lie at residues 1-91 (MWPL…QDEK) and 250-276 (STPE…LTST). Over residues 77-91 (SLQENRSSEDTQDEK) the composition is skewed to basic and acidic residues. A POLO box domain (PBD)-binding motif is present at residues 275 to 277 (STP). Residues 332-335 (EICC) are required for localization to kinetochores.

Interacts with CENPC. Interacts with PLK1; required for recruitment of PLK1 at kinetochores.

The protein localises to the chromosome. It localises to the centromere. Its subcellular location is the kinetochore. Its function is as follows. Key regulator of kinetochore function during meiosis I: required both for mono-orientation of kinetochores on sister chromosomes and protection of centromeric cohesin from separase-mediated cleavage. Acts by facilitating kinetochore mono-orientation during meiosis I, when kinetochores on sister chromosomes face the same direction and are thus captured and pulled by spindle fibers from the same pole. Also required to prevent cleavage of cohesin at centromeres during meiosis I, possibly by acting as a regulator of the shugoshin-dependent protection pathway. Acts in collaboration with PLK1: required for PLK1 enrichment to kinetochores. Not required during meiosis II or mitosis. This chain is Meiosis-specific kinetochore protein, found in Homo sapiens (Human).